A 284-amino-acid chain; its full sequence is 4-diphosphocytidyl-2-C-methyl-D-erythritol kinase (284 aa).

Residue Lys-14 is part of the active site. 98–108 contributes to the ATP binding site; that stretch reads PMGGGLGGGSS. Asp-140 is an active-site residue.

It belongs to the GHMP kinase family. IspE subfamily.

It catalyses the reaction 4-CDP-2-C-methyl-D-erythritol + ATP = 4-CDP-2-C-methyl-D-erythritol 2-phosphate + ADP + H(+). It participates in isoprenoid biosynthesis; isopentenyl diphosphate biosynthesis via DXP pathway; isopentenyl diphosphate from 1-deoxy-D-xylulose 5-phosphate: step 3/6. In terms of biological role, catalyzes the phosphorylation of the position 2 hydroxy group of 4-diphosphocytidyl-2C-methyl-D-erythritol. This chain is 4-diphosphocytidyl-2-C-methyl-D-erythritol kinase, found in Shewanella baltica (strain OS223).